The chain runs to 182 residues: Large ribosomal subunit protein bL25 (182 aa).

The protein belongs to the bacterial ribosomal protein bL25 family. CTC subfamily. In terms of assembly, part of the 50S ribosomal subunit; part of the 5S rRNA/L5/L18/L25 subcomplex. Contacts the 5S rRNA. Binds to the 5S rRNA independently of L5 and L18.

Its function is as follows. This is one of the proteins that binds to the 5S RNA in the ribosome where it forms part of the central protuberance. This chain is Large ribosomal subunit protein bL25, found in Borrelia hermsii (strain HS1 / DAH).